Consider the following 327-residue polypeptide: Malate dehydrogenase (327 aa).

12–18 contributes to the NAD(+) binding site; it reads GAAGQIG. Substrate contacts are provided by Arg93 and Arg99. NAD(+) contacts are provided by residues Asn106, Gln113, and 130-132; that span reads VGN. Substrate-binding residues include Asn132 and Arg163. Residue His188 is the Proton acceptor of the active site.

The protein belongs to the LDH/MDH superfamily. MDH type 2 family.

The catalysed reaction is (S)-malate + NAD(+) = oxaloacetate + NADH + H(+). In terms of biological role, catalyzes the reversible oxidation of malate to oxaloacetate. The protein is Malate dehydrogenase of Paraburkholderia phymatum (strain DSM 17167 / CIP 108236 / LMG 21445 / STM815) (Burkholderia phymatum).